The sequence spans 375 residues: MEKKSVPNSDKLSLIRVLRGIICLMVLVSTAFMMLIFWGFLSAVVLRLFSIRYSRKCVSFFFGSWLALWPFLFEKINKTKVIFSGDKVPCEDRVLLIANHRTEVDWMYFWDLALRKGQIGNIKYVLKSSLMKLPLFGWAFHLFEFIPVERRWEVDEANLRQIVSSFKDPRDALWLALFPEGTDYTEAKCQRSKKFAAENGLPILNNVLLPRTKGFVSCLQELSCSLDAVYDVTIGYKTRCPSFLDNVYGIEPSEVHIHIRRINLTQIPNQEKDINAWLMNTFQLKDQLLNDFYSNGHFPNEGTEKEFNTKKYLINCLAVIAFTTICTHLTFFSSMIWFRIYVSLACVYLTSATHFNLRSVPLVETAKNSLKLVNK.

2 helical membrane-spanning segments follow: residues 21–41 and 57–77; these read IICL…WGFL and CVSF…EKIN. Residues 100 to 105 carry the HXXXXD motif motif; the sequence is HRTEVD. Transmembrane regions (helical) follow at residues 312 to 332 and 337 to 357; these read YLIN…LTFF and WFRI…HFNL.

It belongs to the 1-acyl-sn-glycerol-3-phosphate acyltransferase family. As to expression, widely expressed at low level.

The protein resides in the membrane. It carries out the reaction a 1-acyl-sn-glycero-3-phosphate + an acyl-CoA = a 1,2-diacyl-sn-glycero-3-phosphate + CoA. It participates in phospholipid metabolism; CDP-diacylglycerol biosynthesis; CDP-diacylglycerol from sn-glycerol 3-phosphate: step 2/3. May convert lysophosphatidic acid (LPA) into phosphatidic acid by incorporating acyl moiety at the 2 position. Has no activity when expressed in bacteria or yeast. The polypeptide is Probable 1-acyl-sn-glycerol-3-phosphate acyltransferase 5 (LPAT5) (Arabidopsis thaliana (Mouse-ear cress)).